The sequence spans 230 residues: 5'-methylthioadenosine/S-adenosylhomocysteine nucleosidase (230 aa).

Glu12 functions as the Proton acceptor in the catalytic mechanism. Substrate-binding positions include Gly78, Ile152, and 173 to 174 (ME). The active-site Proton donor is the Asp197.

Belongs to the PNP/UDP phosphorylase family. MtnN subfamily.

It catalyses the reaction S-adenosyl-L-homocysteine + H2O = S-(5-deoxy-D-ribos-5-yl)-L-homocysteine + adenine. It carries out the reaction S-methyl-5'-thioadenosine + H2O = 5-(methylsulfanyl)-D-ribose + adenine. The catalysed reaction is 5'-deoxyadenosine + H2O = 5-deoxy-D-ribose + adenine. Its pathway is amino-acid biosynthesis; L-methionine biosynthesis via salvage pathway; S-methyl-5-thio-alpha-D-ribose 1-phosphate from S-methyl-5'-thioadenosine (hydrolase route): step 1/2. Functionally, catalyzes the irreversible cleavage of the glycosidic bond in both 5'-methylthioadenosine (MTA) and S-adenosylhomocysteine (SAH/AdoHcy) to adenine and the corresponding thioribose, 5'-methylthioribose and S-ribosylhomocysteine, respectively. Also cleaves 5'-deoxyadenosine, a toxic by-product of radical S-adenosylmethionine (SAM) enzymes, into 5-deoxyribose and adenine. This Actinobacillus succinogenes (strain ATCC 55618 / DSM 22257 / CCUG 43843 / 130Z) protein is 5'-methylthioadenosine/S-adenosylhomocysteine nucleosidase.